The following is a 223-amino-acid chain: Glycerol-3-phosphate acyltransferase (223 aa).

5 consecutive transmembrane segments (helical) span residues 2–22 (LEIL…GLVI), 52–72 (WGVA…WLAF), 78–98 (PVFV…SCFM), 112–132 (IFLP…MLVI), and 153–173 (LAVS…AVVV). The segment at 191 to 223 (WLKSKNKGAAAGNAAEGDDTQNMNPQDAGRKDG) is disordered.

Belongs to the PlsY family. Probably interacts with PlsX.

Its subcellular location is the cell inner membrane. The enzyme catalyses an acyl phosphate + sn-glycerol 3-phosphate = a 1-acyl-sn-glycero-3-phosphate + phosphate. The protein operates within lipid metabolism; phospholipid metabolism. In terms of biological role, catalyzes the transfer of an acyl group from acyl-phosphate (acyl-PO(4)) to glycerol-3-phosphate (G3P) to form lysophosphatidic acid (LPA). This enzyme utilizes acyl-phosphate as fatty acyl donor, but not acyl-CoA or acyl-ACP. The protein is Glycerol-3-phosphate acyltransferase of Desulfovibrio desulfuricans (strain ATCC 27774 / DSM 6949 / MB).